Consider the following 158-residue polypeptide: Endoribonuclease YbeY (158 aa).

Residues His120, His124, and His130 each contribute to the Zn(2+) site.

Belongs to the endoribonuclease YbeY family. Zn(2+) is required as a cofactor.

It is found in the cytoplasm. Single strand-specific metallo-endoribonuclease involved in late-stage 70S ribosome quality control and in maturation of the 3' terminus of the 16S rRNA. This chain is Endoribonuclease YbeY, found in Spiroplasma citri.